Consider the following 530-residue polypeptide: Inactive ubiquitin carboxyl-terminal hydrolase 17-like protein 8 (530 aa).

In terms of domain architecture, USP spans 80–375 (AGLQNMGNTC…QAYVLFYIQK (296 aa)). Residues 382–392 (SESVSRGREPR) are compositionally biased toward basic and acidic residues. 2 disordered regions span residues 382–412 (SESVSRGREPRALGAEDTDRPATQGELKRDH) and 493–530 (NSTDQESMNTGTLASLQGRTRRSKGKNKHSKRSLLVCQ). A compositionally biased stretch (polar residues) spans 495-510 (TDQESMNTGTLASLQG). The segment covering 511 to 524 (RTRRSKGKNKHSKR) has biased composition (basic residues).

It belongs to the peptidase C19 family. USP17 subfamily.

It localises to the nucleus. The protein resides in the endoplasmic reticulum. In Homo sapiens (Human), this protein is Inactive ubiquitin carboxyl-terminal hydrolase 17-like protein 8 (USP17L8).